Reading from the N-terminus, the 328-residue chain is Radiation response metalloprotease IrrE (328 aa).

The disordered stretch occupies residues 1-31 (MPSANVSPPCPSGVRGGGMGPKAKAEASKPH). Histidine 118 is a Zn(2+) binding site. The active site involves glutamate 119. Residues histidine 122 and glutamate 149 each contribute to the Zn(2+) site. Disordered regions lie at residues 217–238 (PREQ…LTVR) and 309–328 (RLGR…DAAQ).

Plays a central regulatory role in DNA repair and protection pathways in response to radiation stress. Acts as a site-specific metalloprotease that cleaves and inactivates the repressor protein DdrO, resulting in induced expression of genes required for DNA repair and cell survival after exposure to radiation. Regulates the expression of dozens of proteins from different pathways, including the important DNA repair proteins RecA and PprA. Binds to the promoters of recA and pprA. The protein is Radiation response metalloprotease IrrE of Deinococcus radiodurans (strain ATCC 13939 / DSM 20539 / JCM 16871 / CCUG 27074 / LMG 4051 / NBRC 15346 / NCIMB 9279 / VKM B-1422 / R1).